We begin with the raw amino-acid sequence, 309 residues long: Tagatose-6-phosphate kinase (309 aa).

The protein belongs to the carbohydrate kinase PfkB family. LacC subfamily.

The enzyme catalyses D-tagatofuranose 6-phosphate + ATP = D-tagatofuranose 1,6-bisphosphate + ADP + H(+). The protein operates within carbohydrate metabolism; D-tagatose 6-phosphate degradation; D-glyceraldehyde 3-phosphate and glycerone phosphate from D-tagatose 6-phosphate: step 1/2. The sequence is that of Tagatose-6-phosphate kinase from Streptococcus pneumoniae serotype 4 (strain ATCC BAA-334 / TIGR4).